A 239-amino-acid chain; its full sequence is MRPSRRAPDELRAVSLERGVVKYAEGSCMVKFGDTHVLVTATLEDRLPPWLKGQGRGWVTAEYGMLPRATLERTRREASAGKQNGRTVEIQRLIGRSLRATVDLQALGERQITVDCDVIQADGGTRTASITGAWVALADCIGWMKTRNMFKGTAPVLRDNVAAISCGIYNGTPVLDLDYAEDSEADTDANFVMTGDGRIIEVQGTAEKTPFSQDEFLALMALAKKGVARLVDLQKMAVA.

Phosphate contacts are provided by residues Arg-86 and 124–126; that span reads GTR.

This sequence belongs to the RNase PH family. Homohexameric ring arranged as a trimer of dimers.

The enzyme catalyses tRNA(n+1) + phosphate = tRNA(n) + a ribonucleoside 5'-diphosphate. Phosphorolytic 3'-5' exoribonuclease that plays an important role in tRNA 3'-end maturation. Removes nucleotide residues following the 3'-CCA terminus of tRNAs; can also add nucleotides to the ends of RNA molecules by using nucleoside diphosphates as substrates, but this may not be physiologically important. Probably plays a role in initiation of 16S rRNA degradation (leading to ribosome degradation) during starvation. This is Ribonuclease PH from Rhodopseudomonas palustris (strain BisB18).